We begin with the raw amino-acid sequence, 957 residues long: Bifunctional glutamine synthetase adenylyltransferase/adenylyl-removing enzyme (957 aa).

The tract at residues 1–447 is adenylyl removase; the sequence is MFSQLDFTGL…IFNQLIGEEE (447 aa). The adenylyl transferase stretch occupies residues 454–957; the sequence is VNEQLAIWQD…IWQQIFTDNE (504 aa).

It belongs to the GlnE family. Mg(2+) serves as cofactor.

The catalysed reaction is [glutamine synthetase]-O(4)-(5'-adenylyl)-L-tyrosine + phosphate = [glutamine synthetase]-L-tyrosine + ADP. The enzyme catalyses [glutamine synthetase]-L-tyrosine + ATP = [glutamine synthetase]-O(4)-(5'-adenylyl)-L-tyrosine + diphosphate. Functionally, involved in the regulation of glutamine synthetase GlnA, a key enzyme in the process to assimilate ammonia. When cellular nitrogen levels are high, the C-terminal adenylyl transferase (AT) inactivates GlnA by covalent transfer of an adenylyl group from ATP to specific tyrosine residue of GlnA, thus reducing its activity. Conversely, when nitrogen levels are low, the N-terminal adenylyl removase (AR) activates GlnA by removing the adenylyl group by phosphorolysis, increasing its activity. The regulatory region of GlnE binds the signal transduction protein PII (GlnB) which indicates the nitrogen status of the cell. This Haemophilus ducreyi (strain 35000HP / ATCC 700724) protein is Bifunctional glutamine synthetase adenylyltransferase/adenylyl-removing enzyme.